A 694-amino-acid polypeptide reads, in one-letter code: Maintenance of telomere capping protein 4 (694 aa).

Residues 1–12 show a composition bias toward basic and acidic residues; that stretch reads MTHTNEHDHKAE. The interval 1-26 is disordered; sequence MTHTNEHDHKAEQQQNGRGDTTTETV. Residues 13–26 are compositionally biased toward polar residues; it reads QQQNGRGDTTTETV. Residue S85 is modified to Phosphoserine. Over residues 211–222 the composition is skewed to low complexity; the sequence is YSPSNESSGSSS. 3 disordered regions span residues 211–287, 325–437, and 465–511; these read YSPS…PEAQ, AKGS…TETY, and KTSN…PVGL. The span at 223–243 shows a compositional bias: basic residues; that stretch reads SRRHHGHHIHPRRHLQHHSRV. Residues 244-257 show a composition bias toward polar residues; that stretch reads RTANSVHSNTQSLT. T263 bears the Phosphothreonine mark. Over residues 276 to 287 the composition is skewed to polar residues; sequence MITKIATTPEAQ. Over residues 403 to 417 the composition is skewed to low complexity; the sequence is SNGGTSRRSSNNGES. Over residues 418-437 the composition is skewed to polar residues; that stretch reads ISTNSSKSSMGITFGNTETY. The segment covering 471–485 has biased composition (basic and acidic residues); that stretch reads LRAEGEQALESDKEL. S481 and S491 each carry phosphoserine. Y493 carries the phosphotyrosine modification. The helical transmembrane segment at 655–675 threads the bilayer; the sequence is RLLEFGIVLVLWTIWFLFSVL.

It is found in the membrane. The protein resides in the cytoplasm. This chain is Maintenance of telomere capping protein 4 (MTC4), found in Saccharomyces cerevisiae (strain ATCC 204508 / S288c) (Baker's yeast).